The primary structure comprises 284 residues: MTDRYPSPRALLDRYDLRAKKSWGQNFLGEEAVLDDIARLAAPRAGDPVLELGAGLGHLTARLLARGARVVAVERDRDMARVLRGELGDRITLLEADAARLDHAALAARFGAPAAAGEGARLAVVGNLPYHLTSPILFSILDQVAHVSRAVFLLQREVAERLAAPPASRDWGLLSVLLQREAEVSVERIVPPGAFWPPPKVESAVLCALFRPPADAVGDPARFRRLVKAGFGLRRKTLRNALGSAKLAEPARLEAAFAAAGVDPGRRGETLTLAEWAALDRALG.

Positions 26, 28, 53, 74, 97, and 127 each coordinate S-adenosyl-L-methionine.

The protein belongs to the class I-like SAM-binding methyltransferase superfamily. rRNA adenine N(6)-methyltransferase family. RsmA subfamily.

It is found in the cytoplasm. The catalysed reaction is adenosine(1518)/adenosine(1519) in 16S rRNA + 4 S-adenosyl-L-methionine = N(6)-dimethyladenosine(1518)/N(6)-dimethyladenosine(1519) in 16S rRNA + 4 S-adenosyl-L-homocysteine + 4 H(+). Functionally, specifically dimethylates two adjacent adenosines (A1518 and A1519) in the loop of a conserved hairpin near the 3'-end of 16S rRNA in the 30S particle. May play a critical role in biogenesis of 30S subunits. This chain is Ribosomal RNA small subunit methyltransferase A, found in Anaeromyxobacter dehalogenans (strain 2CP-C).